Reading from the N-terminus, the 353-residue chain is Photosystem II D2 protein (353 aa).

Thr-2 carries the post-translational modification N-acetylthreonine. Position 2 is a phosphothreonine (Thr-2). The chain crosses the membrane as a helical span at residues 41–61 (CAYFALGGWFTGTTFVTSWYT). His-118 contacts chlorophyll a. The chain crosses the membrane as a helical span at residues 125–141 (GFMLRQFELARSVQLRP). Gln-130 and Asn-143 together coordinate pheophytin a. The chain crosses the membrane as a helical span at residues 153–166 (VFVSVFLIYPLGQS). His-198 is a chlorophyll a binding site. The helical transmembrane segment at 208–228 (AALLCAIHGATVENTLFEDGD) threads the bilayer. 2 residues coordinate a plastoquinone: His-215 and Phe-262. Residue His-215 participates in Fe cation binding. His-269 contacts Fe cation. A helical membrane pass occupies residues 279–295 (GLWMSALGVVGLALNLR).

The protein belongs to the reaction center PufL/M/PsbA/D family. As to quaternary structure, PSII is composed of 1 copy each of membrane proteins PsbA, PsbB, PsbC, PsbD, PsbE, PsbF, PsbH, PsbI, PsbJ, PsbK, PsbL, PsbM, PsbT, PsbX, PsbY, PsbZ, Psb30/Ycf12, at least 3 peripheral proteins of the oxygen-evolving complex and a large number of cofactors. It forms dimeric complexes. Requires The D1/D2 heterodimer binds P680, chlorophylls that are the primary electron donor of PSII, and subsequent electron acceptors. It shares a non-heme iron and each subunit binds pheophytin, quinone, additional chlorophylls, carotenoids and lipids. There is also a Cl(-1) ion associated with D1 and D2, which is required for oxygen evolution. The PSII complex binds additional chlorophylls, carotenoids and specific lipids. as cofactor.

The protein localises to the plastid. It localises to the chloroplast thylakoid membrane. The catalysed reaction is 2 a plastoquinone + 4 hnu + 2 H2O = 2 a plastoquinol + O2. Photosystem II (PSII) is a light-driven water:plastoquinone oxidoreductase that uses light energy to abstract electrons from H(2)O, generating O(2) and a proton gradient subsequently used for ATP formation. It consists of a core antenna complex that captures photons, and an electron transfer chain that converts photonic excitation into a charge separation. The D1/D2 (PsbA/PsbD) reaction center heterodimer binds P680, the primary electron donor of PSII as well as several subsequent electron acceptors. D2 is needed for assembly of a stable PSII complex. In Spinacia oleracea (Spinach), this protein is Photosystem II D2 protein.